Consider the following 264-residue polypeptide: Phosphonoacetaldehyde hydrolase (264 aa).

Residue aspartate 9 is the Nucleophile of the active site. 2 residues coordinate Mg(2+): aspartate 9 and alanine 11. Lysine 50 serves as the catalytic Schiff-base intermediate with substrate. Aspartate 183 is a Mg(2+) binding site.

The protein belongs to the HAD-like hydrolase superfamily. PhnX family. In terms of assembly, homodimer. The cofactor is Mg(2+).

The enzyme catalyses phosphonoacetaldehyde + H2O = acetaldehyde + phosphate + H(+). Functionally, involved in phosphonate degradation. In Bacillus mycoides (strain KBAB4) (Bacillus weihenstephanensis), this protein is Phosphonoacetaldehyde hydrolase.